A 332-amino-acid chain; its full sequence is MRATVLGAGSWGTALASLLAGKGYTVTSWDKDAAVLDDIARNHRNERYLPGLHLPPTLHASAEVAKALEGAELVVLAVPSHAVRPVVIEAKRHVHAGTPIVCVAKGIELDTLMTMTEVVEDVLPVPLHPYLAVLSGPSFAKEVAKGLPTAVTVAARWERIAKQVQDAFHTKTFRPYTSGDVVGCEIGGCVKNVVAIAAGISDGMGFGANAMAALVTRGLAEITRLAVRKGANPLTLSGLAGLGDLVLTCSSDLSRNRTVGRGLAEGKTADAIQRELGQVAEGVRNARSARELAKRLGVEMPITEAIYRVLYEGLAPREAVTALMMRETKPEL.

NADPH-binding residues include S10, W11, K31, and K105. K105, G136, and S138 together coordinate sn-glycerol 3-phosphate. A140 contacts NADPH. Sn-glycerol 3-phosphate-binding residues include K191, D244, S254, R255, and N256. K191 acts as the Proton acceptor in catalysis. Position 255 (R255) interacts with NADPH. NADPH-binding residues include V279 and E281.

This sequence belongs to the NAD-dependent glycerol-3-phosphate dehydrogenase family.

Its subcellular location is the cytoplasm. The catalysed reaction is sn-glycerol 3-phosphate + NAD(+) = dihydroxyacetone phosphate + NADH + H(+). It catalyses the reaction sn-glycerol 3-phosphate + NADP(+) = dihydroxyacetone phosphate + NADPH + H(+). Its pathway is membrane lipid metabolism; glycerophospholipid metabolism. Its function is as follows. Catalyzes the reduction of the glycolytic intermediate dihydroxyacetone phosphate (DHAP) to sn-glycerol 3-phosphate (G3P), the key precursor for phospholipid synthesis. The chain is Glycerol-3-phosphate dehydrogenase [NAD(P)+] from Anaeromyxobacter dehalogenans (strain 2CP-C).